Consider the following 196-residue polypeptide: uncharacterized protein (196 aa).

An N-terminal signal peptide occupies residues 1–27 (MSVLSRAVQLAFVALGLCLFFSNLVAA).

The protein resides in the secreted. This is an uncharacterized protein from Arthroderma benhamiae (strain ATCC MYA-4681 / CBS 112371) (Trichophyton mentagrophytes).